Consider the following 254-residue polypeptide: Protein EFFECTOR OF TRANSCRIPTION 3 (254 aa).

The GIY-YIG domain maps to 103–152; it reads RCTGLYELGVGVIGQDQGQNFDPDNNVLGVYVGQCVDVKSRLQDYGRRGG.

Its subcellular location is the cytoplasm. In Arabidopsis thaliana (Mouse-ear cress), this protein is Protein EFFECTOR OF TRANSCRIPTION 3.